The primary structure comprises 208 residues: Small ribosomal subunit protein uS4 (208 aa).

Positions 98–161 (TRLDNTVYRL…RKIPVIAEAQ (64 aa)) constitute an S4 RNA-binding domain.

Belongs to the universal ribosomal protein uS4 family. In terms of assembly, part of the 30S ribosomal subunit. Contacts protein S5. The interaction surface between S4 and S5 is involved in control of translational fidelity.

In terms of biological role, one of the primary rRNA binding proteins, it binds directly to 16S rRNA where it nucleates assembly of the body of the 30S subunit. Functionally, with S5 and S12 plays an important role in translational accuracy. The sequence is that of Small ribosomal subunit protein uS4 from Maridesulfovibrio salexigens (strain ATCC 14822 / DSM 2638 / NCIMB 8403 / VKM B-1763) (Desulfovibrio salexigens).